Consider the following 598-residue polypeptide: UvrABC system protein C (598 aa).

The GIY-YIG domain maps to 14–91 (DSPGCYLHKD…IQKNMPKYNI (78 aa)). In terms of domain architecture, UVR spans 196 to 231 (DKIIEDLRSKMLAASEEMAFERAAEYRDLISGIATM).

The protein belongs to the UvrC family. Interacts with UvrB in an incision complex.

The protein localises to the cytoplasm. Functionally, the UvrABC repair system catalyzes the recognition and processing of DNA lesions. UvrC both incises the 5' and 3' sides of the lesion. The N-terminal half is responsible for the 3' incision and the C-terminal half is responsible for the 5' incision. This chain is UvrABC system protein C, found in Streptococcus pyogenes serotype M18 (strain MGAS8232).